A 332-amino-acid chain; its full sequence is Ketol-acid reductoisomerase (NADP(+)) (332 aa).

Residues 2-182 (AKVYHDTEVS…GATRAGVLET (181 aa)) form the KARI N-terminal Rossmann domain. NADP(+) is bound by residues 25–28 (YGSQ), Arg48, Ser53, and 83–86 (DTEQ). His108 is an active-site residue. Residue Gly134 participates in NADP(+) binding. Positions 183-328 (TFKEETETDL…KVLREMMPWL (146 aa)) constitute a KARI C-terminal knotted domain. Mg(2+) contacts are provided by Asp191, Glu195, Glu227, and Glu231. Ser252 lines the substrate pocket.

It belongs to the ketol-acid reductoisomerase family. Mg(2+) serves as cofactor.

The catalysed reaction is (2R)-2,3-dihydroxy-3-methylbutanoate + NADP(+) = (2S)-2-acetolactate + NADPH + H(+). It carries out the reaction (2R,3R)-2,3-dihydroxy-3-methylpentanoate + NADP(+) = (S)-2-ethyl-2-hydroxy-3-oxobutanoate + NADPH + H(+). The protein operates within amino-acid biosynthesis; L-isoleucine biosynthesis; L-isoleucine from 2-oxobutanoate: step 2/4. Its pathway is amino-acid biosynthesis; L-valine biosynthesis; L-valine from pyruvate: step 2/4. Its function is as follows. Involved in the biosynthesis of branched-chain amino acids (BCAA). Catalyzes an alkyl-migration followed by a ketol-acid reduction of (S)-2-acetolactate (S2AL) to yield (R)-2,3-dihydroxy-isovalerate. In the isomerase reaction, S2AL is rearranged via a Mg-dependent methyl migration to produce 3-hydroxy-3-methyl-2-ketobutyrate (HMKB). In the reductase reaction, this 2-ketoacid undergoes a metal-dependent reduction by NADPH to yield (R)-2,3-dihydroxy-isovalerate. The sequence is that of Ketol-acid reductoisomerase (NADP(+)) from Dictyoglomus turgidum (strain DSM 6724 / Z-1310).